A 340-amino-acid polypeptide reads, in one-letter code: DNA-directed RNA polymerase subunit alpha (340 aa).

Residues 1–235 (MYRNWTELIK…DQLNPFINFD (235 aa)) form an alpha N-terminal domain (alpha-NTD) region. The interval 251 to 340 (WNPNLFRKVD…LSKQFEEENF (90 aa)) is alpha C-terminal domain (alpha-CTD).

It belongs to the RNA polymerase alpha chain family. As to quaternary structure, homodimer. The RNAP catalytic core consists of 2 alpha, 1 beta, 1 beta' and 1 omega subunit. When a sigma factor is associated with the core the holoenzyme is formed, which can initiate transcription.

The enzyme catalyses RNA(n) + a ribonucleoside 5'-triphosphate = RNA(n+1) + diphosphate. Functionally, DNA-dependent RNA polymerase catalyzes the transcription of DNA into RNA using the four ribonucleoside triphosphates as substrates. This chain is DNA-directed RNA polymerase subunit alpha, found in Magnetococcus marinus (strain ATCC BAA-1437 / JCM 17883 / MC-1).